We begin with the raw amino-acid sequence, 1049 residues long: ABC transporter ATM1 (1049 aa).

The transit peptide at Met1 to Tyr90 directs the protein to the mitochondrion. 6 helical membrane-spanning segments follow: residues Ile357–Leu377, Ile397–Ser419, Val481–Thr501, Tyr506–Ile526, Phe591–Thr611, and Ile619–Leu639. Residues Ser360–Leu651 form the ABC transmembrane type-1 domain. The 237-residue stretch at Leu807–Ser1043 folds into the ABC transporter domain. ATP is bound at residue Gly843 to Ser850.

This sequence belongs to the ABC transporter superfamily. ABCB family. Heavy Metal importer (TC 3.A.1.210) subfamily. As to quaternary structure, homodimer. Interacts with ISCU. Interacts with IscA2. Interacts with NBP35. Interacts with mHCF101.

Its subcellular location is the mitochondrion membrane. ATPase activity is stimulated by reduced glutathione. Transports glutathione-coordinated [4Fe-4S] iron-sulfur clusters in an ATP-dependent manner. Required for optimal parasite growth during erythrocytic stages. The protein is ABC transporter ATM1 of Plasmodium falciparum (isolate 3D7).